The primary structure comprises 210 residues: Somatotropin (210 aa).

Residues 1–22 (MGQVFLLMPVLLVSCFLSQGAA) form the signal peptide. A Zn(2+)-binding site is contributed by histidine 38. Cysteine 71 and cysteine 183 are oxidised to a cystine. Glutamate 192 is a binding site for Zn(2+). Residues cysteine 200 and cysteine 208 are joined by a disulfide bond.

It belongs to the somatotropin/prolactin family.

It is found in the secreted. Growth hormone plays an important role in growth control and is involved in the regulation of several anabolic processes. Implicated as an osmoregulatory substance important for seawater adaptation. In Oncorhynchus keta (Chum salmon), this protein is Somatotropin (gh).